A 197-amino-acid polypeptide reads, in one-letter code: Recombination protein RecR (197 aa).

The segment at 57-72 adopts a C4-type zinc-finger fold; the sequence is CSRCGYLTDFDPCLIC. One can recognise a Toprim domain in the interval 80 to 174; sequence SLICIGEESS…KVTRLAHGLP (95 aa).

This sequence belongs to the RecR family.

In terms of biological role, may play a role in DNA repair. It seems to be involved in an RecBC-independent recombinational process of DNA repair. It may act with RecF and RecO. The protein is Recombination protein RecR of Syntrophomonas wolfei subsp. wolfei (strain DSM 2245B / Goettingen).